Here is a 230-residue protein sequence, read N- to C-terminus: Uracil-DNA glycosylase (230 aa).

Asp65 functions as the Proton acceptor in the catalytic mechanism.

It belongs to the uracil-DNA glycosylase (UDG) superfamily. UNG family.

The protein resides in the cytoplasm. The enzyme catalyses Hydrolyzes single-stranded DNA or mismatched double-stranded DNA and polynucleotides, releasing free uracil.. Functionally, excises uracil residues from the DNA which can arise as a result of misincorporation of dUMP residues by DNA polymerase or due to deamination of cytosine. This chain is Uracil-DNA glycosylase, found in Lactiplantibacillus plantarum (strain ATCC BAA-793 / NCIMB 8826 / WCFS1) (Lactobacillus plantarum).